The primary structure comprises 102 residues: RNA-binding protein Hfq (102 aa).

The Sm domain occupies Asp-9–Val-68. A disordered region spans residues Val-63–Glu-102. The span at His-70–Asn-88 shows a compositional bias: low complexity.

It belongs to the Hfq family. In terms of assembly, homohexamer.

Its function is as follows. RNA chaperone that binds small regulatory RNA (sRNAs) and mRNAs to facilitate mRNA translational regulation in response to envelope stress, environmental stress and changes in metabolite concentrations. Also binds with high specificity to tRNAs. The sequence is that of RNA-binding protein Hfq from Salmonella agona (strain SL483).